Reading from the N-terminus, the 136-residue chain is Ig heavy chain V-A2 region P-MU-3 (136 aa).

Residues Met1–Cys19 form the signal peptide. At Gln20 the chain carries Pyrrolidone carboxylic acid. An Ig-like domain is found at Gln20–Gly127.

The chain is Ig heavy chain V-A2 region P-MU-3 from Oryctolagus cuniculus (Rabbit).